Consider the following 464-residue polypeptide: uncharacterized protein (464 aa).

The signal sequence occupies residues 1–24; sequence MSRFVPRIIPFYLLLLVAGGTANA.

The protein belongs to the intimin/invasin family.

Its subcellular location is the periplasm. This is an uncharacterized protein from Escherichia coli (strain K12).